Here is a 160-residue protein sequence, read N- to C-terminus: Transcription antitermination protein NusB (160 aa).

It belongs to the NusB family.

Its function is as follows. Involved in transcription antitermination. Required for transcription of ribosomal RNA (rRNA) genes. Binds specifically to the boxA antiterminator sequence of the ribosomal RNA (rrn) operons. The chain is Transcription antitermination protein NusB from Chlamydia pneumoniae (Chlamydophila pneumoniae).